A 258-amino-acid chain; its full sequence is Granzyme M (258 aa).

In terms of domain architecture, Peptidase S1 spans 21–250; that stretch reads IIGGREAVPH…YSSWIRKVIG (230 aa). A disulfide bond links C46 and C62. Active-site charge relay system residues include H61 and D107. The disordered stretch occupies residues 122–141; the sequence is NVKPLALPRKPRDKPAEGSR. 3 disulfides stabilise this stretch: C142/C210, C173/C189, and C200/C226. N-linked (GlcNAc...) asparagine glycosylation occurs at N174. S204 serves as the catalytic Charge relay system. N225 carries N-linked (GlcNAc...) asparagine glycosylation.

Belongs to the peptidase S1 family. Granzyme subfamily.

It localises to the secreted. The protein localises to the cytoplasmic granule. Its function is as follows. Cleaves peptide substrates after methionine, leucine, and norleucine. Physiological substrates include EZR, alpha-tubulins and the apoptosis inhibitor BIRC5/Survivin. Promotes caspase activation and subsequent apoptosis of target cells. This chain is Granzyme M (Gzmm), found in Rattus norvegicus (Rat).